Reading from the N-terminus, the 500-residue chain is NAD(P)H-quinone oxidoreductase chain 4, chloroplastic (500 aa).

A run of 14 helical transmembrane segments spans residues 4–24 (FPWLTIIVVFPISAGSLMLFL), 35–55 (YTICICILELLITTYAFCYNF), 87–107 (IGTILLTGFITTLATLAAFPV), 113–130 (LFHFLMLAMYSGQIGSFS), 134–154 (LLLFFIMWELELIPVYLLLSM), 167–187 (FILYTAGSSIFLLIGVLGISL), 211–231 (IILYIGFLIAFAVKSPLIPLH), 242–262 (HYSTCMLLAGILLKMGAYGLV), 272–292 (AHSLFSPWLMVVGTIQIIYAA), 305–325 (IAYSSVSHMGFIIIGIASITD), 330–350 (GAILQIISHGFIGAALFFLAG), 386–406 (LALPGMSGFVAEFIVFFGIIT), 416–436 (IFIIVVMAIGMILTPIYLLSM), and 462–482 (LFLSISSLLPIIGMGIYPDFV).

The protein belongs to the complex I subunit 4 family.

The protein localises to the plastid. Its subcellular location is the chloroplast thylakoid membrane. The enzyme catalyses a plastoquinone + NADH + (n+1) H(+)(in) = a plastoquinol + NAD(+) + n H(+)(out). It carries out the reaction a plastoquinone + NADPH + (n+1) H(+)(in) = a plastoquinol + NADP(+) + n H(+)(out). This chain is NAD(P)H-quinone oxidoreductase chain 4, chloroplastic, found in Aethionema cordifolium (Lebanon stonecress).